Consider the following 30-residue polypeptide: Chassatide C3 (30 aa).

A cross-link (cyclopeptide (Gly-Asn)) is located at residues 1 to 30 (GIPCGESCVWIPCISSALGCSCKNKVCYRN). 3 disulfide bridges follow: Cys4–Cys20, Cys8–Cys22, and Cys13–Cys27.

Post-translationally, this is a cyclic peptide. As to expression, expressed in fruit, pedicel, stem and root but not in leaf (at protein level).

Functionally, probably participates in a plant defense mechanism. In Chassalia chartacea (Chassalia curviflora), this protein is Chassatide C3.